We begin with the raw amino-acid sequence, 368 residues long: o-succinylbenzoate synthase (368 aa).

The Proton donor role is filled by K183. Mg(2+)-binding residues include D213, E239, and D264. Catalysis depends on K290, which acts as the Proton acceptor.

Belongs to the mandelate racemase/muconate lactonizing enzyme family. MenC type 1 subfamily. Monomer. A divalent metal cation is required as a cofactor.

It catalyses the reaction (1R,6R)-6-hydroxy-2-succinyl-cyclohexa-2,4-diene-1-carboxylate = 2-succinylbenzoate + H2O. It functions in the pathway quinol/quinone metabolism; 1,4-dihydroxy-2-naphthoate biosynthesis; 1,4-dihydroxy-2-naphthoate from chorismate: step 4/7. It participates in cofactor biosynthesis; phylloquinone biosynthesis. Functionally, converts 2-succinyl-6-hydroxy-2,4-cyclohexadiene-1-carboxylate (SHCHC) to 2-succinylbenzoate (OSB). Does not show N-succinylamino acid racemase (NSAR) activity with N-succinyl-L-phenylglycine as substrate. The protein is o-succinylbenzoate synthase of Desulfotalea psychrophila (strain LSv54 / DSM 12343).